A 349-amino-acid chain; its full sequence is Secretory carrier-associated membrane protein 3 (349 aa).

Residues 1–90 (MAQSRDTGNP…EPRNYGSYST (90 aa)) form a disordered region. Residues 1–168 (MAQSRDTGNP…PQEFQKTVST (168 aa)) are Cytoplasmic-facing. Ser32 is subject to Phosphoserine. Thr37 carries the post-translational modification Phosphothreonine. Phosphotyrosine occurs at positions 41 and 53. Positions 49 to 68 (PPPAYEPPAPAPAPLPPPSA) are enriched in pro residues. A phosphoserine mark is found at Ser74 and Ser78. Tyr85 carries the phosphotyrosine modification. Ser87 is subject to Phosphoserine. Transmembrane regions (helical) follow at residues 169 to 189 (MYYL…ACLA), 200 to 220 (GFGL…VCWY), 236 to 256 (FVFF…AIGI), and 277 to 297 (VAVL…LGIV). At 298-349 (MLKRIHSLYRQTGASFQKAQQEFAAGVFSNPAVRTAAANAAAGAAENAFRAP) the chain is on the cytoplasmic side. Lys315 participates in a covalent cross-link: Glycyl lysine isopeptide (Lys-Gly) (interchain with G-Cter in SUMO1).

It belongs to the SCAMP family. As to quaternary structure, interacts with NEDD4 and NEDD4L and TSG101. Interacts with RNF126. Monoubiquitinated.

The protein resides in the membrane. In terms of biological role, functions in post-Golgi recycling pathways. Acts as a recycling carrier to the cell surface. This is Secretory carrier-associated membrane protein 3 (Scamp3) from Mus musculus (Mouse).